A 388-amino-acid chain; its full sequence is Chorismate synthase (388 aa).

NADP(+) contacts are provided by Arg39 and Arg45. FMN-binding positions include 130 to 132 (RSS), 251 to 252 (NA), Gly296, 311 to 315 (KPIPT), and Arg337.

It belongs to the chorismate synthase family. As to quaternary structure, homotetramer. It depends on FMNH2 as a cofactor.

It catalyses the reaction 5-O-(1-carboxyvinyl)-3-phosphoshikimate = chorismate + phosphate. Its pathway is metabolic intermediate biosynthesis; chorismate biosynthesis; chorismate from D-erythrose 4-phosphate and phosphoenolpyruvate: step 7/7. Functionally, catalyzes the anti-1,4-elimination of the C-3 phosphate and the C-6 proR hydrogen from 5-enolpyruvylshikimate-3-phosphate (EPSP) to yield chorismate, which is the branch point compound that serves as the starting substrate for the three terminal pathways of aromatic amino acid biosynthesis. This reaction introduces a second double bond into the aromatic ring system. This is Chorismate synthase from Streptococcus pyogenes serotype M5 (strain Manfredo).